The chain runs to 306 residues: Ribosomal protein L11 methyltransferase (306 aa).

Residues threonine 152, glycine 179, aspartate 201, and asparagine 243 each contribute to the S-adenosyl-L-methionine site.

This sequence belongs to the methyltransferase superfamily. PrmA family.

It is found in the cytoplasm. It catalyses the reaction L-lysyl-[protein] + 3 S-adenosyl-L-methionine = N(6),N(6),N(6)-trimethyl-L-lysyl-[protein] + 3 S-adenosyl-L-homocysteine + 3 H(+). Methylates ribosomal protein L11. This Geobacter sp. (strain M21) protein is Ribosomal protein L11 methyltransferase.